The following is a 2551-amino-acid chain: Probable polyketide synthase 13 (2551 aa).

One can recognise a Ketosynthase family 3 (KS3) domain in the interval 10–434 (ENDVAIIGIG…GSNCCLILSQ (425 aa)). Active-site for beta-ketoacyl synthase activity residues include C176, H317, and H358. The tract at residues 621 to 654 (GIEVSFIIGHSLGEIPAAYCSGMINIDTLCYLIY) is acyl/malonyl transferase. Residue S631 is the For acyl/malonyl transferase activity of the active site. The segment at 928–1057 (TDNLGYLNEN…GDFQLSNHSS (130 aa)) is N-terminal hotdog fold. A PKS/mFAS DH domain is found at 928 to 1226 (TDNLGYLNEN…CTSLTPIKES (299 aa)). H961 (proton acceptor; for dehydratase activity) is an active-site residue. A C-terminal hotdog fold region spans residues 1076 to 1226 (NLTKLSRDEL…CTSLTPIKES (151 aa)). The active-site Proton donor; for dehydratase activity is D1136. The 78-residue stretch at 2465–2542 (DCQTIIKDSF…SSIQYTINSF (78 aa)) folds into the Carrier domain. An O-(pantetheine 4'-phosphoryl)serine modification is found at S2502.

The cofactor is pantetheine 4'-phosphate.

Its function is as follows. Probable polyketide synthase. The protein is Probable polyketide synthase 13 (pks13) of Dictyostelium discoideum (Social amoeba).